A 243-amino-acid chain; its full sequence is tRNA pseudouridine synthase A (243 aa).

Aspartate 53 functions as the Nucleophile in the catalytic mechanism. A substrate-binding site is contributed by tyrosine 111.

This sequence belongs to the tRNA pseudouridine synthase TruA family. Homodimer.

The catalysed reaction is uridine(38/39/40) in tRNA = pseudouridine(38/39/40) in tRNA. In terms of biological role, formation of pseudouridine at positions 38, 39 and 40 in the anticodon stem and loop of transfer RNAs. The sequence is that of tRNA pseudouridine synthase A from Pelodictyon phaeoclathratiforme (strain DSM 5477 / BU-1).